A 366-amino-acid chain; its full sequence is MKAAYYIGIMSGTSLDGIDAVLADFEAPRPVLLDNFYLPYPEKLREQLKALHFPAHGELHRAATLGNQLARHYAEAVGGLLRKSGVAPPEVAAIGCHGQTIRHCPQAEAGYTIQLCNSPLLVELTGIRVVSDFRSRDIAAGGQGAPLVPAFHQALFADPHVHRVIVNIGGISNLTDLPRNGSVTGFDCGPGNAMMDEWCARHTGQAYDEEGRWAATGKTLSVLLEKLLALPFFSLPPPKSVSRELFSTTWLEGYLKGDESPADVQATLLELTVAGIARCILGYCGDATEIYVCGGGARNSYLIASLQEALSGRKVGLTDSLGVDADWLEAFAFAWLARQLIQGIPGNIPSVTGAKGPRLLGAIYPA.

Residue 12–19 (GTSLDGID) coordinates ATP.

This sequence belongs to the anhydro-N-acetylmuramic acid kinase family.

The enzyme catalyses 1,6-anhydro-N-acetyl-beta-muramate + ATP + H2O = N-acetyl-D-muramate 6-phosphate + ADP + H(+). It participates in amino-sugar metabolism; 1,6-anhydro-N-acetylmuramate degradation. Its pathway is cell wall biogenesis; peptidoglycan recycling. Catalyzes the specific phosphorylation of 1,6-anhydro-N-acetylmuramic acid (anhMurNAc) with the simultaneous cleavage of the 1,6-anhydro ring, generating MurNAc-6-P. Is required for the utilization of anhMurNAc either imported from the medium or derived from its own cell wall murein, and thus plays a role in cell wall recycling. The polypeptide is Anhydro-N-acetylmuramic acid kinase (Nitrosospira multiformis (strain ATCC 25196 / NCIMB 11849 / C 71)).